The chain runs to 284 residues: NAD(P)H-hydrate epimerase (284 aa).

The transit peptide at 1–55 (MSGLRTLLGLGLLVSSSRFPRVVARGGPRCPGPAWWAARPMHLGDSTMAGGTVKY) directs the protein to the mitochondrion. Residues 61–271 (AQAVDEELFN…DLEKKYQLNL (211 aa)) form the YjeF N-terminal domain. 115-119 (NNGGD) contributes to the (6S)-NADPHX binding site. Asn-116 serves as a coordination point for K(+). N6-succinyllysine is present on Lys-140. Asp-181 contacts K(+). (6S)-NADPHX contacts are provided by residues 185–191 (GFSFKGA) and Asp-214. Ser-217 provides a ligand contact to K(+).

Belongs to the NnrE/AIBP family. In terms of assembly, homodimer. Interacts with APOA1 and APOA2. K(+) serves as cofactor. Undergoes physiological phosphorylation during sperm capacitation, downstream to PKA activation.

The protein localises to the mitochondrion. It is found in the secreted. The catalysed reaction is (6R)-NADHX = (6S)-NADHX. The enzyme catalyses (6R)-NADPHX = (6S)-NADPHX. Functionally, catalyzes the epimerization of the S- and R-forms of NAD(P)HX, a damaged form of NAD(P)H that is a result of enzymatic or heat-dependent hydration. This is a prerequisite for the S-specific NAD(P)H-hydrate dehydratase to allow the repair of both epimers of NAD(P)HX. Accelerates cholesterol efflux from endothelial cells to high-density lipoprotein (HDL) and thereby regulates angiogenesis. The protein is NAD(P)H-hydrate epimerase of Monodelphis domestica (Gray short-tailed opossum).